The chain runs to 92 residues: MEFLLQLENILKKRKQDLPDKSYTADLFRGGVDRILKKVGEEAGEVIIAAKNSDKKELTHEAADLLFHLQVLLVEQELSLQDVVEELRKRHS.

This sequence belongs to the PRA-PH family.

It is found in the cytoplasm. The enzyme catalyses 1-(5-phospho-beta-D-ribosyl)-ATP + H2O = 1-(5-phospho-beta-D-ribosyl)-5'-AMP + diphosphate + H(+). It functions in the pathway amino-acid biosynthesis; L-histidine biosynthesis; L-histidine from 5-phospho-alpha-D-ribose 1-diphosphate: step 2/9. The chain is Phosphoribosyl-ATP pyrophosphatase from Leptospira borgpetersenii serovar Hardjo-bovis (strain JB197).